The following is a 364-amino-acid chain: DNA polymerase IV (364 aa).

The UmuC domain maps to I14–G198. Positions 18 and 116 each coordinate Mg(2+). Residue E117 is part of the active site.

Belongs to the DNA polymerase type-Y family. Monomer. The cofactor is Mg(2+).

The protein resides in the cytoplasm. It carries out the reaction DNA(n) + a 2'-deoxyribonucleoside 5'-triphosphate = DNA(n+1) + diphosphate. Functionally, poorly processive, error-prone DNA polymerase involved in untargeted mutagenesis. Copies undamaged DNA at stalled replication forks, which arise in vivo from mismatched or misaligned primer ends. These misaligned primers can be extended by PolIV. Exhibits no 3'-5' exonuclease (proofreading) activity. May be involved in translesional synthesis, in conjunction with the beta clamp from PolIII. In Streptococcus pyogenes serotype M18 (strain MGAS8232), this protein is DNA polymerase IV.